The chain runs to 209 residues: MKRLVTGLLALSLFLAACGQDSDQQKDSNKEKDDKAKTEQQDEKTNDSSKDKKDKKDDSKDVNKDNKDNSANDNQQQSNSNATNNDQNQTNNNQSSNNQANNNQKSSYVAPYYGQNAAPVVRQIYPFNGNKTQALQQLPNFQTALNSANNEANKFGSNNKVYNDYSIEEHNGNYKYVFSFKDPNANGKYSIVTVDYTGQAMVTDPNYQQ.

Positions 1-17 (MKRLVTGLLALSLFLAA) are cleaved as a signal peptide. Positions 17–105 (ACGQDSDQQK…SNNQANNNQK (89 aa)) are disordered. A lipid anchor (N-palmitoyl cysteine) is attached at cysteine 18. Cysteine 18 carries the S-diacylglycerol cysteine lipid modification. Over residues 23–70 (DQQKDSNKEKDDKAKTEQQDEKTNDSSKDKKDKKDDSKDVNKDNKDNS) the composition is skewed to basic and acidic residues. Residues 71 to 105 (ANDNQQQSNSNATNNDQNQTNNNQSSNNQANNNQK) show a composition bias toward low complexity.

Its subcellular location is the cell membrane. This is an uncharacterized protein from Staphylococcus aureus (strain bovine RF122 / ET3-1).